Reading from the N-terminus, the 481-residue chain is Phototropic-responsive NPH3 family protein NPY4 (481 aa).

In terms of domain architecture, BTB spans 29 to 102 (TEIIIIIGNV…CYGITVTLNA (74 aa)). The 244-residue stretch at 207 to 450 (DWWVEDLCEL…VQVLFFEQIR (244 aa)) folds into the NPH3 domain. Residue Tyr-391 is modified to Phosphotyrosine. The disordered stretch occupies residues 456 to 481 (TGYSTPELTTTTLNTEDDEWDHEKEF). Residues 460–469 (TPELTTTTLN) show a composition bias toward low complexity.

This sequence belongs to the NPH3 family. In terms of tissue distribution, expressed in the hypocotyl cells that would differentiate into vascular bundles. Highly expressed in primary root tips and radicles.

The protein resides in the cell membrane. Its subcellular location is the cytoplasm. It is found in the cytosol. It participates in protein modification; protein ubiquitination. In terms of biological role, may act as a substrate-specific adapter of an E3 ubiquitin-protein ligase complex (CUL3-RBX1-BTB) which mediates the ubiquitination and subsequent proteasomal degradation of target proteins. Plays an essential role in auxin-mediated organogenesis and in root gravitropic responses through the control of PIN proteins (e.g. PIN1 and PIN2) polarity in the root tip endodermal cell layer and in shoot epidermis. Recruited to the plasma membrane by PINs (e.g. PIN1 and PIN2) and, in concert with AGC kinases-mediated (e.g. D6PK and PID) PINs phosphorylation, maintains their polarity through limiting lateral diffusion-based escape. The chain is Phototropic-responsive NPH3 family protein NPY4 from Arabidopsis thaliana (Mouse-ear cress).